The primary structure comprises 239 residues: Major centromere autoantigen B (239 aa).

The interval 28-185 is disordered; sequence AGFGGGPNAT…DDEVPVPSFG (158 aa). 2 positions are modified to phosphothreonine: threonine 37 and threonine 39. Composition is skewed to acidic residues over residues 46–117 and 148–179; these read GEEE…EAED and GEEDSESDSEEEEEDDDEDEDDEDDEEEDDEV. Residues 176-239 are homodimerization; that stretch reads DDEVPVPSFG…AGARGLGHQS (64 aa).

As to quaternary structure, antiparallel homodimer. Interacts with CENPT. Identified in a centromere complex containing histones H2A, H2B and H4, and at least CENPA, CENPB, CENPC, CENPT, CENPN, HJURP, SUPT16H, SSRP1 and RSF1. In terms of processing, poly-ADP-ribosylated by PARP1. N-terminally methylated by METTL11A/NTM1. Alpha-N-methylation is stimulated in response extracellular stimuli, including increased cell density and heat shock, and seems to facilitate binding to CENP-B boxes. Chromatin-bound CENP-B is primarily trimethylated.

It is found in the nucleus. It localises to the chromosome. Its subcellular location is the centromere. Functionally, interacts with centromeric heterochromatin in chromosomes and binds to a specific 17 bp subset of alphoid satellite DNA, called the CENP-B box. May organize arrays of centromere satellite DNA into a higher-order structure which then directs centromere formation and kinetochore assembly in mammalian chromosomes. In Ovis aries (Sheep), this protein is Major centromere autoantigen B (CENPB).